Consider the following 376-residue polypeptide: Peroxisomal membrane protein PEX27 (376 aa).

As to quaternary structure, homooligomer. Interacts with PEX25 and PEX34.

It localises to the peroxisome membrane. In terms of biological role, required for regulation of peroxisome size and number. Also promotes peroxisome division and biogenesis. This Saccharomyces cerevisiae (strain ATCC 204508 / S288c) (Baker's yeast) protein is Peroxisomal membrane protein PEX27 (PEX27).